The following is a 145-amino-acid chain: Transcription antitermination protein NusB (145 aa).

This sequence belongs to the NusB family.

Its function is as follows. Involved in transcription antitermination. Required for transcription of ribosomal RNA (rRNA) genes. Binds specifically to the boxA antiterminator sequence of the ribosomal RNA (rrn) operons. The polypeptide is Transcription antitermination protein NusB (Burkholderia vietnamiensis (strain G4 / LMG 22486) (Burkholderia cepacia (strain R1808))).